Consider the following 299-residue polypeptide: MSGFVEKPEPLQVPGLVHLHTGKVRDLYQNEAGDLVMVASDRLSAFDWVLPTEIPDKGRVLTQLSLWWFDRLVDLAPNHVLSTELPPGAPADWQGRTLICKSLKMEPVECVARGYLTGSGLVEYNETRTVCGLALPEGLVDGSELPGPIFTPATKAAVGEHDENVSYEEVARQVGAETAAKLRQTTLAVYARARDIARRRGIILADTKFEFGFDGDTLVLADEVLTPDSSRFWPADQWEPGRAQPSFDKQFVRDWLTSPESGWDRKSEQPPPPLPQHVVDATRAKYVEAYERLTGANWS.

The tract at residues 259 to 279 is disordered; the sequence is PESGWDRKSEQPPPPLPQHVV.

Belongs to the SAICAR synthetase family.

The enzyme catalyses 5-amino-1-(5-phospho-D-ribosyl)imidazole-4-carboxylate + L-aspartate + ATP = (2S)-2-[5-amino-1-(5-phospho-beta-D-ribosyl)imidazole-4-carboxamido]succinate + ADP + phosphate + 2 H(+). The protein operates within purine metabolism; IMP biosynthesis via de novo pathway; 5-amino-1-(5-phospho-D-ribosyl)imidazole-4-carboxamide from 5-amino-1-(5-phospho-D-ribosyl)imidazole-4-carboxylate: step 1/2. This is Phosphoribosylaminoimidazole-succinocarboxamide synthase from Streptomyces avermitilis (strain ATCC 31267 / DSM 46492 / JCM 5070 / NBRC 14893 / NCIMB 12804 / NRRL 8165 / MA-4680).